The chain runs to 1183 residues: DNA-directed RNA polymerase subunit beta (1183 aa).

Belongs to the RNA polymerase beta chain family. The RNAP catalytic core consists of 2 alpha, 1 beta, 1 beta' and 1 omega subunit. When a sigma factor is associated with the core the holoenzyme is formed, which can initiate transcription.

The enzyme catalyses RNA(n) + a ribonucleoside 5'-triphosphate = RNA(n+1) + diphosphate. Its function is as follows. DNA-dependent RNA polymerase catalyzes the transcription of DNA into RNA using the four ribonucleoside triphosphates as substrates. This chain is DNA-directed RNA polymerase subunit beta, found in Staphylococcus aureus (strain COL).